A 639-amino-acid polypeptide reads, in one-letter code: Sec1 family domain-containing protein 1 (639 aa).

3 positions are modified to phosphoserine: S34, S300, and S525.

The protein belongs to the STXBP/unc-18/SEC1 family. As to quaternary structure, interacts with STX17. Interacts with STX5A. Interacts with the COG complex via COG4.

It localises to the cytoplasm. It is found in the endoplasmic reticulum membrane. Its subcellular location is the golgi apparatus. The protein localises to the golgi stack membrane. Functionally, plays a role in SNARE-pin assembly and Golgi-to-ER retrograde transport via its interaction with COG4. Involved in vesicular transport between the endoplasmic reticulum and the Golgi. This Mus musculus (Mouse) protein is Sec1 family domain-containing protein 1 (Scfd1).